A 325-amino-acid chain; its full sequence is LIM and senescent cell antigen-like-containing domain protein 1 (325 aa).

Ala-2 carries the N-acetylalanine modification. 5 consecutive LIM zinc-binding domains span residues 10–62, 71–121, 135–184, 193–243, and 252–303; these read CERC…CEHD, CHQC…CRPC, CQKC…CLPC, CGAC…CETH, and CFHC…CKKC.

In terms of assembly, component of the heterotrimeric IPP (ILK-PINCH-PARVIN) complex composed of ILK, LIMS1/PINCH and PARVA; the complex binds to F-actin via the C-terminal tail of LIMS1 and the N-terminal region of PARVA, promoting F-actin filament bundling. Formation of the IPP complex is dependent on protein kinase C and precedes integrin-mediated cell adhesion and spreading. Competes with LIMS2 for interaction with ILK. Interacts with SH3/SH2 adapter NCK2, thereby linking the complex to cell surface receptors. Interacts (via LIM zinc-binding 5) with TGFB1I1.

The protein localises to the cell junction. The protein resides in the focal adhesion. Its subcellular location is the cell membrane. Within the IPP (ILK-PINCH-PARVIN) complex, binds to F-actin, promoting F-actin bundling, a process required to generate force for actin cytoskeleton reorganization and subsequent dynamic cell adhesion events such as cell spreading and migration. In Mus musculus (Mouse), this protein is LIM and senescent cell antigen-like-containing domain protein 1 (Lims1).